A 71-amino-acid chain; its full sequence is Bacteriocin carnobacteriocin-A (71 aa).

A propeptide spanning residues 1 to 18 is cleaved from the precursor; it reads MNNVKELSIKEMQQVTGG. An intrachain disulfide couples cysteine 40 to cysteine 69.

Its subcellular location is the secreted. Has antibacterial activity. The polypeptide is Bacteriocin carnobacteriocin-A (cbnBA) (Carnobacterium maltaromaticum (Carnobacterium piscicola)).